The sequence spans 187 residues: Protein lethal(2)essential for life (187 aa).

The sHSP domain occupies 61–170; sequence NSLQKQESGS…TERLVQITQT (110 aa). Positions 151-187 are disordered; sequence APMKALPPPQTERLVQITQTGPSSKEDNAKKVETSTA. Over residues 174-187 the composition is skewed to basic and acidic residues; it reads SKEDNAKKVETSTA.

This sequence belongs to the small heat shock protein (HSP20) family. In terms of tissue distribution, ubiquitously expressed during embryogenesis with no sign of tissue specificity in expression up to stage 16.

In terms of biological role, vital role in embryonic development. The chain is Protein lethal(2)essential for life (l(2)efl) from Drosophila melanogaster (Fruit fly).